The primary structure comprises 1158 residues: ATP-dependent helicase/deoxyribonuclease subunit B (1158 aa).

It belongs to the helicase family. AddB/RexB type 2 subfamily. Heterodimer of AddA and RexB. It depends on Mg(2+) as a cofactor.

In terms of biological role, the heterodimer acts as both an ATP-dependent DNA helicase and an ATP-dependent, dual-direction single-stranded exonuclease. Recognizes the chi site generating a DNA molecule suitable for the initiation of homologous recombination. This subunit has 5' -&gt; 3' nuclease activity but not helicase activity. This chain is ATP-dependent helicase/deoxyribonuclease subunit B, found in Lactobacillus johnsonii (strain CNCM I-12250 / La1 / NCC 533).